We begin with the raw amino-acid sequence, 343 residues long: Probable magnesium transporter NIPA4 (343 aa).

Residues 1–18 lie on the Extracellular side of the membrane; the sequence is MAESSGSWRDSYKGMSSD. A helical transmembrane segment spans residues 19 to 39; the sequence is NIKGLVLALSSSLFIGASFIV. Over 40-66 the chain is Cytoplasmic; sequence KKKGLKKAASTGTRAGVGGYSYLYEPL. The helical transmembrane segment at 67–87 threads the bilayer; the sequence is WWIGMTTMLLGEIANFAAYAF. Residues 88 to 90 lie on the Extracellular side of the membrane; it reads APA. Residues 91–111 form a helical membrane-spanning segment; sequence ILVTPLGAVSIIISAVLAHII. Residues 112–115 lie on the Cytoplasmic side of the membrane; it reads LREK. A helical transmembrane segment spans residues 116-136; sequence LHIFGILGCALCVVGSTTIVL. Topologically, residues 137–157 are extracellular; that stretch reads HAPQEREIDSVIEVWNLATEP. A helical membrane pass occupies residues 158–178; it reads AFMFYASLVIGAAVFLIIRFV. The Cytoplasmic segment spans residues 179 to 189; sequence PQYGQTNVMVY. The chain crosses the membrane as a helical span at residues 190-210; it reads IGICSLVGSLSVMSVKALGIA. Topologically, residues 211–220 are extracellular; sequence LKLTFSGTNQ. The chain crosses the membrane as a helical span at residues 221-241; the sequence is LFYPQTWIFTLVVLTCVVTQL. Residues 242 to 254 are Cytoplasmic-facing; that stretch reads NYLNKALDTFNTA. A helical membrane pass occupies residues 255-275; sequence IVSPIYYVMFTSLTILASVIM. The Extracellular segment spans residues 276 to 283; the sequence is FKDWDRQN. The chain crosses the membrane as a helical span at residues 284-304; that stretch reads GTQIVTEICGFVTILSGTFLL. Residues 305–343 lie on the Cytoplasmic side of the membrane; it reads HRTKDMVEGSSVILPLRISKHINEEEGIPLRRQESLRSP.

The protein belongs to the NIPA (TC 2.A.7) family. As to quaternary structure, homodimer.

It localises to the cell membrane. The protein resides in the early endosome. Functionally, acts as a Mg(2+) transporter. Can also transport other divalent cations such as Fe(2+), Sr(2+), Ba(2+), Mn(2+) and Co(2+) but to a much less extent than Mg(2+). This is Probable magnesium transporter NIPA4 from Arabidopsis thaliana (Mouse-ear cress).